We begin with the raw amino-acid sequence, 473 residues long: Catalase easC (473 aa).

Over residues 1–15 the composition is skewed to low complexity; that stretch reads MASEVSVASSGSEHS. The disordered stretch occupies residues 1–31; the sequence is MASEVSVASSGSEHSGAQKCPFQDPGLSSMD. Histidine 54 is an active-site residue. Tyrosine 344 serves as a coordination point for heme. The tract at residues 369 to 388 is disordered; sequence DGARPEKAEMAPQKVPSQEH.

Belongs to the catalase family. Heme is required as a cofactor.

The protein operates within alkaloid biosynthesis; ergot alkaloid biosynthesis. Catalase; part of the gene cluster that mediates the biosynthesis of fungal ergot alkaloid. DmaW catalyzes the first step of ergot alkaloid biosynthesis by condensing dimethylallyl diphosphate (DMAP) and tryptophan to form 4-dimethylallyl-L-tryptophan. The second step is catalyzed by the methyltransferase easF that methylates 4-dimethylallyl-L-tryptophan in the presence of S-adenosyl-L-methionine, resulting in the formation of 4-dimethylallyl-L-abrine. The catalase easC and the FAD-dependent oxidoreductase easE then transform 4-dimethylallyl-L-abrine to chanoclavine-I which is further oxidized by easD in the presence of NAD(+), resulting in the formation of chanoclavine-I aldehyde. Agroclavine dehydrogenase easG then mediates the conversion of chanoclavine-I aldehyde to agroclavine via a non-enzymatic adduct reaction: the substrate is an iminium intermediate that is formed spontaneously from chanoclavine-I aldehyde in the presence of glutathione. The presence of easA is not required to complete this reaction. Further conversion of agroclavine to paspalic acid is a two-step process involving oxidation of agroclavine to elymoclavine and of elymoclavine to paspalic acid, the second step being performed by the elymoclavine oxidase cloA. Paspalic acid is then further converted to D-lysergic acid. Ergopeptines are assembled from D-lysergic acid and three different amino acids by the D-lysergyl-peptide-synthetases composed each of a monomudular and a trimodular nonribosomal peptide synthetase subunit. LpsB and lpsC encode the monomodular subunits responsible for D-lysergic acid activation and incorporation into the ergopeptine backbone. LpsA1 and A2 subunits encode the trimodular nonribosomal peptide synthetase assembling the tripeptide portion of ergopeptines. LpsA1 is responsible for formation of the major ergopeptine, ergotamine, and lpsA2 for alpha-ergocryptine, the minor ergopeptine of the total alkaloid mixture elaborated by C.purpurea. D-lysergyl-tripeptides are assembled by the nonribosomal peptide synthetases and released as N-(D-lysergyl-aminoacyl)-lactams. Cyclolization of the D-lysergyl-tripeptides is performed by the Fe(2+)/2-ketoglutarate-dependent dioxygenase easH which introduces a hydroxyl group into N-(D-lysergyl-aminoacyl)-lactam at alpha-C of the aminoacyl residue followed by spontaneous condensation with the terminal lactam carbonyl group. The sequence is that of Catalase easC from Claviceps purpurea (Ergot fungus).